A 363-amino-acid chain; its full sequence is MAP kinase kinase mkk-4 (363 aa).

The segment at 1–38 is disordered; the sequence is MVQEDDENLRNSMSLRPTSLSTRPTSLSVNGNEKTLPE. Over residues 14–28 the composition is skewed to low complexity; sequence SLRPTSLSTRPTSLS. The Protein kinase domain maps to 66–330; it reads LQDLGAIGNG…YDTLKSFDFY (265 aa). Residues 72 to 80 and Lys-95 each bind ATP; that span reads IGNGNFGTV. Asp-194 serves as the catalytic Proton acceptor.

This sequence belongs to the protein kinase superfamily. STE Ser/Thr protein kinase family. MAP kinase kinase subfamily. As to expression, expressed in the pharynx, including the corpus, isthmus and terminal bulb.

It is found in the cytoplasm. It carries out the reaction L-seryl-[protein] + ATP = O-phospho-L-seryl-[protein] + ADP + H(+). It catalyses the reaction L-threonyl-[protein] + ATP = O-phospho-L-threonyl-[protein] + ADP + H(+). The enzyme catalyses L-tyrosyl-[protein] + ATP = O-phospho-L-tyrosyl-[protein] + ADP + H(+). Activity is required in presynaptic neurons, in a dose-dependent manner, for normal presynaptic development and morphology. Plays a role in the formation of muscle connections, also called muscle arm extensions, between the body wall and the motor axons in the dorsal and ventral cord. The sequence is that of MAP kinase kinase mkk-4 (mkk-4) from Caenorhabditis elegans.